Here is a 1191-residue protein sequence, read N- to C-terminus: MPSEGSQQPSLDSFFKRKNPRVEPYSRTGNNAIIDLTDSPPNKKIKLDDEGSQKNRSMTQTSSSYFKGHPTARPLSVDKRLPRKPSAAIQAYKLQDVIPPQPSHSGLAFETCSLVPQASFVPDSQPEPSASPAPQRTTEQLKRHEEWKTRILAMSGSFRRKRSLALDEAVAAEAREAAGLEDEGTPFDGSDGDDYKSESEKNAEEVGKQLKKYVAKELAGKGKSKGKKKEEIGPSGLAYTPLEKQFMEIKEQNRDVLLLMEVGYKYKFHGEDAKTASRELGIVAFPNRNFFTASIPTHRLHIHVKKLLSLGYKVGVITQTETAALKKIGDNRNAPFARKLTHLFTAATYVEDPSLSSSSSSSSSVRFDDPVVPGTAPPPTNALVAIVEQPVDRASDDRVKVGLVCVVPGTGDITWDEFDDSQIRTELETRLAHLSPAELLLPKQRLSKATEKVLTYFAGEPKHRGRNAVRIERIDNIPEYDAAFDFLTNFYHCKEHKATVSKGDVNDERHLMTEGNKQWSLQPKLSQDGADISLDEEIYLASGVSSSKAILTLVDFPKQVVISMAVAIRYMKRFGLENAFKHTSSFVRFANRSHMLLSSNTLANLEIYQNQTDGGLYGSLIWLLDHCKTRMGKRLLREWVGRPLLDVAALKARADAIEEIMENNSYHMEKLRSLLINMPDLVRGLTRVQYGKATPNELATLLITLVRLASEFKPNMGNVFRSCLLNNIPNTLPTILDTSQRFLNALNLKQARENDVANLWADPDRFPDIQDVKDCISVCEMELNEHLMELRKILKKPTLRYITVSGIEYLVEVPIRDTKIVPAQWMKISATRTVNRYHTPKILAITKERTQHLEKLSIVAREAFIAFQSEVAEYHELVVVSKQIAVIDCLMSLAQTAAASGYCKPKFVAEPELKILAGRHPMVEMLREESYVPFDIHFSKEEGTTKIITGPNMAGKSSTVRAMALIVCMAQIGSFVPAASVTLSVHDSVQTRMGASDEIGRGKSTFMVELSETSDILQTITPRSLVVLDELGRGTSTYDGIAIAYATLSHIAEIGCNTLFVTHYPTVAQDLAREKPDKISNWHMSFDEIQMPDGGAEITFLYQLTRGLQEASFGVWCARLAGLPKPILDTAQMRSSSLKAETQERLRGIVARRVGWMLHNLFDNKTSSSQVLRNVEMLHNSLSSSSISFSQ.

Polar residues-rich tracts occupy residues 1–11 and 54–65; these read MPSEGSQQPSL and KNRSMTQTSSSY. Disordered regions lie at residues 1–82, 118–148, and 175–203; these read MPSE…KRLP, ASFV…EEWK, and REAA…EKNA. Residues 122–135 show a composition bias toward low complexity; that stretch reads PDSQPEPSASPAPQ. Basic and acidic residues-rich tracts occupy residues 139–148 and 193–203; these read EQLKRHEEWK and DDYKSESEKNA. The segment at 233-347 is mispair-binding domain; that stretch reads GPSGLAYTPL…RKLTHLFTAA (115 aa). 950–957 is a binding site for ATP; it reads GPNMAGKS.

The protein belongs to the DNA mismatch repair MutS family. MSH3 subfamily. Heterodimer consisting of MSH2-MSH3 (MutS beta). Forms a ternary complex with MutL alpha (MLH1-PMS1).

Its subcellular location is the nucleus. In terms of biological role, component of the post-replicative DNA mismatch repair system (MMR). Heterodimerizes with MSH2 to form MutS beta, which binds to DNA mismatches thereby initiating DNA repair. MSH3 provides substrate-binding and substrate specificity to the complex. When bound, the MutS beta heterodimer bends the DNA helix and shields approximately 20 base pairs. Acts mainly to repair insertion-deletion loops (IDLs) from 2 to 13 nucleotides in size, but can also repair base-base and single insertion-deletion mismatches that occur during replication. After mismatch binding, forms a ternary complex with the MutL alpha heterodimer, which is thought to be responsible for directing the downstream MMR events, including strand discrimination, excision, and resynthesis. ATP binding and hydrolysis play a pivotal role in mismatch repair functions. This chain is DNA mismatch repair protein MSH3 (MSH3), found in Cryptococcus neoformans var. neoformans serotype D (strain JEC21 / ATCC MYA-565) (Filobasidiella neoformans).